The primary structure comprises 150 residues: Lipoprotein signal peptidase (150 aa).

A run of 2 helical transmembrane segments spans residues 58–78 and 85–107; these read FFII…FKST and SFSL…GYVV. Active-site residues include aspartate 108 and aspartate 122. Residues 117–137 traverse the membrane as a helical segment; the sequence is VFNLADFFITGGVLLLTFLIL.

It belongs to the peptidase A8 family.

Its subcellular location is the cell membrane. It carries out the reaction Release of signal peptides from bacterial membrane prolipoproteins. Hydrolyzes -Xaa-Yaa-Zaa-|-(S,diacylglyceryl)Cys-, in which Xaa is hydrophobic (preferably Leu), and Yaa (Ala or Ser) and Zaa (Gly or Ala) have small, neutral side chains.. The protein operates within protein modification; lipoprotein biosynthesis (signal peptide cleavage). This protein specifically catalyzes the removal of signal peptides from prolipoproteins. The chain is Lipoprotein signal peptidase from Caldicellulosiruptor bescii (strain ATCC BAA-1888 / DSM 6725 / KCTC 15123 / Z-1320) (Anaerocellum thermophilum).